Reading from the N-terminus, the 250-residue chain is Large ribosomal subunit protein uL30B (250 aa).

The protein belongs to the universal ribosomal protein uL30 family. In terms of assembly, component of the large ribosomal subunit (LSU). Mature yeast ribosomes consist of a small (40S) and a large (60S) subunit. The 40S small subunit contains 1 molecule of ribosomal RNA (18S rRNA) and at least 33 different proteins. The large 60S subunit contains 3 rRNA molecules (25S, 5.8S and 5S rRNA) and at least 46 different proteins.

The protein resides in the cytoplasm. The protein localises to the nucleus. It is found in the nucleolus. Functionally, component of the ribosome, a large ribonucleoprotein complex responsible for the synthesis of proteins in the cell. The small ribosomal subunit (SSU) binds messenger RNAs (mRNAs) and translates the encoded message by selecting cognate aminoacyl-transfer RNA (tRNA) molecules. The large subunit (LSU) contains the ribosomal catalytic site termed the peptidyl transferase center (PTC), which catalyzes the formation of peptide bonds, thereby polymerizing the amino acids delivered by tRNAs into a polypeptide chain. The nascent polypeptides leave the ribosome through a tunnel in the LSU and interact with protein factors that function in enzymatic processing, targeting, and the membrane insertion of nascent chains at the exit of the ribosomal tunnel. This chain is Large ribosomal subunit protein uL30B (rpl702), found in Schizosaccharomyces pombe (strain 972 / ATCC 24843) (Fission yeast).